Reading from the N-terminus, the 347-residue chain is F-box protein At2g14500 (347 aa).

The F-box domain maps to 6 to 52 (PLTLSELPHDLLRNIFNRLSFADFHRATWNSISKQTAPPKTKSPWLI).

In Arabidopsis thaliana (Mouse-ear cress), this protein is F-box protein At2g14500.